The primary structure comprises 207 residues: Thymidylate kinase (207 aa).

Position 7–14 (G7–S14) interacts with ATP.

This sequence belongs to the thymidylate kinase family.

The enzyme catalyses dTMP + ATP = dTDP + ADP. In terms of biological role, phosphorylation of dTMP to form dTDP in both de novo and salvage pathways of dTTP synthesis. The protein is Thymidylate kinase of Pseudomonas putida (strain W619).